The sequence spans 366 residues: Ribonuclease P protein subunit drpp30 (366 aa).

The segment at 265-366 (EDTQPTNNNI…DIDNNKRKRE (102 aa)) is disordered. Residues 275–290 (PHEKHINKESTGKETI) show a composition bias toward basic and acidic residues. 2 stretches are compositionally biased toward low complexity: residues 291–324 (PKPTTTTTTTTTTTTTAKTKTPTPTPTTEKTPSI) and 333–351 (TAKSNKKTTTNTTSTAQKQ). Basic and acidic residues predominate over residues 352-366 (GKMDIDIDNNKRKRE).

It belongs to the eukaryotic/archaeal RNase P protein component 3 family.

The protein resides in the nucleus. The catalysed reaction is Endonucleolytic cleavage of RNA, removing 5'-extranucleotides from tRNA precursor.. Component of ribonuclease P, a protein complex that generates mature tRNA molecules by cleaving their 5'-ends. The sequence is that of Ribonuclease P protein subunit drpp30 (drpp30) from Dictyostelium discoideum (Social amoeba).